The sequence spans 295 residues: NAD kinase (295 aa).

The active-site Proton acceptor is Asp74. Residues 74 to 75 (DG), 148 to 149 (ND), His159, Arg176, Asp178, and 189 to 194 (TAYALS) each bind NAD(+).

Belongs to the NAD kinase family. A divalent metal cation is required as a cofactor.

The protein localises to the cytoplasm. It carries out the reaction NAD(+) + ATP = ADP + NADP(+) + H(+). In terms of biological role, involved in the regulation of the intracellular balance of NAD and NADP, and is a key enzyme in the biosynthesis of NADP. Catalyzes specifically the phosphorylation on 2'-hydroxyl of the adenosine moiety of NAD to yield NADP. This chain is NAD kinase, found in Legionella pneumophila (strain Paris).